The primary structure comprises 338 residues: UDP-glucose 4-epimerase (338 aa).

NAD(+)-binding positions include 11–12 (FI), 31–36 (DNLCNS), 58–59 (DI), 80–84 (FAGLK), N99, S124, Y149, K153, and F178. Residues S124 and Y149 each coordinate substrate. Y149 acts as the Proton acceptor in catalysis. Residues N179, 199 to 200 (NL), 216 to 218 (SVF), R231, and 292 to 295 (RAGD) each bind substrate.

This sequence belongs to the NAD(P)-dependent epimerase/dehydratase family. Homodimer. NAD(+) serves as cofactor.

It carries out the reaction UDP-alpha-D-glucose = UDP-alpha-D-galactose. It functions in the pathway carbohydrate metabolism; galactose metabolism. Its function is as follows. Involved in the metabolism of galactose. Plays an essential role in the incorporation of galactose into meningococcal lipopolysaccharide surface molecules, which are important for pathogenesis. Catalyzes the conversion of UDP-galactose (UDP-Gal) to UDP-glucose (UDP-Glc) through a mechanism involving the transient reduction of NAD. The protein is UDP-glucose 4-epimerase (galE) of Neisseria gonorrhoeae.